Here is a 279-residue protein sequence, read N- to C-terminus: HTH-type transcriptional regulator HdfR (279 aa).

Residues 1 to 58 (MDTELLKTFLEVSRTRHFGRAAESLYLTQSAVSFRIRQLENQLGVNLFTRHRNNIRLT) form the HTH lysR-type domain. Positions 18-37 (FGRAAESLYLTQSAVSFRIR) form a DNA-binding region, H-T-H motif.

Belongs to the LysR transcriptional regulatory family.

Negatively regulates the transcription of the flagellar master operon flhDC by binding to the upstream region of the operon. The sequence is that of HTH-type transcriptional regulator HdfR from Escherichia fergusonii (strain ATCC 35469 / DSM 13698 / CCUG 18766 / IAM 14443 / JCM 21226 / LMG 7866 / NBRC 102419 / NCTC 12128 / CDC 0568-73).